The following is a 597-amino-acid chain: Zinc finger CCCH domain-containing protein 29 (597 aa).

ANK repeat units lie at residues 76 to 106 (EERTPLMVAAMYGSMEVLNYIIATGRSDVNR) and 111 to 143 (EKVTALHCAVSGCSVSIVEIIKILLDASASPNC). 2 C3H1-type zinc fingers span residues 254–281 (PYTCVPCPEFRKGSCPKGDSCEYAHGVF) and 289–313 (QYRTRLCKDETGCARRVCFFAHRRD). Residues 320-337 (ASTGSAMVSPRSSNQSPE) are compositionally biased toward polar residues. Residues 320 to 341 (ASTGSAMVSPRSSNQSPEMSVM) form a disordered region.

In terms of tissue distribution, expressed in roots and anthers.

It is found in the nucleus. Its function is as follows. Involved in salt stress response. May positively modulate plant tolerance to salt stress. In Arabidopsis thaliana (Mouse-ear cress), this protein is Zinc finger CCCH domain-containing protein 29.